The sequence spans 297 residues: MSIDKKIRQIAFYGKGGIGKSTTSQNTLAAMAEMGQRILIVGCDPKADSTRLMLHSKAQTTVLHLAAERGAVEDLELEEVMLTGFRGVKCVESGGPEPGVGCAGRGIITAINFLEENGAYQDVDFVSYDVLGDVVCGGFAMPIRENKAQEIYIVTSGEMMAMYAANNIARGILKYAHTGGVRLGGLICNSRNVDREIELIETLAKRLNTQMIHYVPRDNIVQHAELRRMTVNEYAPDSNQGNEYRILANKIINNENLKIPTPIEMEELEELLIEFGILESEENAAKMIATTSESKSK.

Gly-14 to Ser-21 lines the ATP pocket. Residue Cys-102 participates in [4Fe-4S] cluster binding. Arg-105 is modified (ADP-ribosylarginine; by dinitrogenase reductase ADP-ribosyltransferase). Cys-136 contributes to the [4Fe-4S] cluster binding site.

Belongs to the NifH/BchL/ChlL family. As to quaternary structure, homodimer. [4Fe-4S] cluster is required as a cofactor. Post-translationally, the reversible ADP-ribosylation of Arg-105 inactivates the nitrogenase reductase and regulates nitrogenase activity.

The enzyme catalyses N2 + 8 reduced [2Fe-2S]-[ferredoxin] + 16 ATP + 16 H2O = H2 + 8 oxidized [2Fe-2S]-[ferredoxin] + 2 NH4(+) + 16 ADP + 16 phosphate + 6 H(+). The key enzymatic reactions in nitrogen fixation are catalyzed by the nitrogenase complex, which has 2 components: the iron protein and the molybdenum-iron protein. The sequence is that of Nitrogenase iron protein 2 (nifH2) from Nostoc sp. (strain PCC 7120 / SAG 25.82 / UTEX 2576).